Consider the following 138-residue polypeptide: Large ribosomal subunit protein uL16 (138 aa).

Residues 1–16 show a composition bias toward basic residues; sequence MLIPRRVKHRKQHHPG. Residues 1 to 24 form a disordered region; it reads MLIPRRVKHRKQHHPGRSGAATGG.

The protein belongs to the universal ribosomal protein uL16 family. In terms of assembly, part of the 50S ribosomal subunit.

Functionally, binds 23S rRNA and is also seen to make contacts with the A and possibly P site tRNAs. The protein is Large ribosomal subunit protein uL16 of Paenarthrobacter aurescens (strain TC1).